The following is a 118-amino-acid chain: Small ribosomal subunit protein uS13 (118 aa).

A disordered region spans residues 94–118 (GLPVRGQRTQTNARTRKGPRRLARK). Residues 107 to 118 (RTRKGPRRLARK) show a composition bias toward basic residues.

This sequence belongs to the universal ribosomal protein uS13 family. As to quaternary structure, part of the 30S ribosomal subunit. Forms a loose heterodimer with protein S19. Forms two bridges to the 50S subunit in the 70S ribosome.

Its function is as follows. Located at the top of the head of the 30S subunit, it contacts several helices of the 16S rRNA. In the 70S ribosome it contacts the 23S rRNA (bridge B1a) and protein L5 of the 50S subunit (bridge B1b), connecting the 2 subunits; these bridges are implicated in subunit movement. Contacts the tRNAs in the A and P-sites. In Nitrosococcus oceani (strain ATCC 19707 / BCRC 17464 / JCM 30415 / NCIMB 11848 / C-107), this protein is Small ribosomal subunit protein uS13.